Reading from the N-terminus, the 255-residue chain is Ribonuclease HII (255 aa).

In terms of domain architecture, RNase H type-2 spans 72–255; the sequence is AIICGIDEVG…KSFEPIKSLL (184 aa). Residues Asp-78, Glu-79, and Asp-170 each contribute to the a divalent metal cation site.

The protein belongs to the RNase HII family. Requires Mn(2+) as cofactor. Mg(2+) is required as a cofactor.

It is found in the cytoplasm. It catalyses the reaction Endonucleolytic cleavage to 5'-phosphomonoester.. Functionally, endonuclease that specifically degrades the RNA of RNA-DNA hybrids. This Staphylococcus aureus (strain MSSA476) protein is Ribonuclease HII.